The chain runs to 187 residues: Elongation factor P (187 aa).

Belongs to the elongation factor P family.

It localises to the cytoplasm. The protein operates within protein biosynthesis; polypeptide chain elongation. Functionally, involved in peptide bond synthesis. Stimulates efficient translation and peptide-bond synthesis on native or reconstituted 70S ribosomes in vitro. Probably functions indirectly by altering the affinity of the ribosome for aminoacyl-tRNA, thus increasing their reactivity as acceptors for peptidyl transferase. The polypeptide is Elongation factor P (Parvibaculum lavamentivorans (strain DS-1 / DSM 13023 / NCIMB 13966)).